Reading from the N-terminus, the 102-residue chain is Acid shock protein (102 aa).

An N-terminal signal peptide occupies residues 1-21; sequence MKKVLALVVAAAMGLSSAAFA. The span at 22–41 shows a compositional bias: low complexity; sequence AETATTPAPTATTTKAAPAK. Residues 22-58 constitute a propeptide that is removed on maturation; sequence AETATTPAPTATTTKAAPAKTTHHKKQHKAAPAQKAQ. Residues 22–102 are disordered; that stretch reads AETATTPAPT…PAKPAAQPAA (81 aa). Residues 80–90 are compositionally biased toward basic residues; the sequence is AAKKHAKKHSH. Over residues 91–102 the composition is skewed to low complexity; that stretch reads QQPAKPAAQPAA.

This sequence belongs to the Asr family. Proteolytic processing gives rise to the active protein.

It localises to the periplasm. Its function is as follows. Required for growth and/or survival at acidic conditions. The polypeptide is Acid shock protein (Escherichia coli O17:K52:H18 (strain UMN026 / ExPEC)).